We begin with the raw amino-acid sequence, 517 residues long: Cytochrome P450 monooxygenase 124 (517 aa).

A helical membrane pass occupies residues 3 to 23 (SLLVLFVSLLALGALKKHLDF). Position 453 (cysteine 453) interacts with heme.

The protein belongs to the cytochrome P450 family. It depends on heme as a cofactor.

Its subcellular location is the membrane. Its pathway is secondary metabolite biosynthesis. Its function is as follows. Cytochrome P450 monooxygenase that is able to use trans-stilbene as a substrate for oxidation. The sequence is that of Cytochrome P450 monooxygenase 124 from Postia placenta (strain ATCC 44394 / Madison 698-R) (Brown rot fungus).